Here is a 408-residue protein sequence, read N- to C-terminus: Elongation factor Tu, chloroplastic (408 aa).

A tr-type G domain is found at 10–213 (KPHVNIGTIG…KVDEYIPTPE (204 aa)). Residues 19 to 26 (GHVDHGKT) are G1. 19–26 (GHVDHGKT) lines the GTP pocket. A Mg(2+)-binding site is contributed by T26. Positions 59–63 (GITIN) are G2. The interval 80-83 (DCPG) is G3. GTP contacts are provided by residues 80–84 (DCPGH) and 135–138 (NKAD). The interval 135-138 (NKAD) is G4. The segment at 173-175 (SAL) is G5.

Belongs to the TRAFAC class translation factor GTPase superfamily. Classic translation factor GTPase family. EF-Tu/EF-1A subfamily.

It localises to the plastid. It is found in the chloroplast. The enzyme catalyses GTP + H2O = GDP + phosphate + H(+). Its function is as follows. GTP hydrolase that promotes the GTP-dependent binding of aminoacyl-tRNA to the A-site of ribosomes during protein biosynthesis. This chain is Elongation factor Tu, chloroplastic (tufA), found in Guillardia theta (Cryptophyte).